The following is a 206-amino-acid chain: MKILLTGFEPFGGDDKNPTMDIVEALSERIPEVVGEILPVSFKRAREKLLKVLDDVRPDITINLGLAPGRTHISVERVAVNMIDARIPDNDGEQPKDEPIVEGGPAAYFATIPTREIVEEMKKNGIPAVLSYTAGTYLCNFAMYLTLHTSATKGYPKIAGFIHVPYTPDQVLEKKNTPSMSLDLEIKGVEIAIRVAQSALHSSQLR.

Catalysis depends on residues Glu-76, Cys-139, and His-163.

It belongs to the peptidase C15 family. In terms of assembly, homotetramer.

The protein localises to the cytoplasm. The catalysed reaction is Release of an N-terminal pyroglutamyl group from a polypeptide, the second amino acid generally not being Pro.. Functionally, removes 5-oxoproline from various penultimate amino acid residues except L-proline. This is Pyrrolidone-carboxylate peptidase (pcp) from Pyrococcus horikoshii (strain ATCC 700860 / DSM 12428 / JCM 9974 / NBRC 100139 / OT-3).